Consider the following 214-residue polypeptide: NADH-quinone oxidoreductase subunit C (214 aa).

Belongs to the complex I 30 kDa subunit family. NDH-1 is composed of 14 different subunits. Subunits NuoB, C, D, E, F, and G constitute the peripheral sector of the complex.

Its subcellular location is the cell inner membrane. It catalyses the reaction a quinone + NADH + 5 H(+)(in) = a quinol + NAD(+) + 4 H(+)(out). NDH-1 shuttles electrons from NADH, via FMN and iron-sulfur (Fe-S) centers, to quinones in the respiratory chain. The immediate electron acceptor for the enzyme in this species is believed to be ubiquinone. Couples the redox reaction to proton translocation (for every two electrons transferred, four hydrogen ions are translocated across the cytoplasmic membrane), and thus conserves the redox energy in a proton gradient. The protein is NADH-quinone oxidoreductase subunit C of Francisella tularensis subsp. mediasiatica (strain FSC147).